We begin with the raw amino-acid sequence, 243 residues long: Small ribosomal subunit protein uS3 (243 aa).

One can recognise a KH type-2 domain in the interval 22–93 (LNEFLTRELA…SVELYAEKVA (72 aa)). Residues 195-243 (QQGKNGPKKPQPDHILVTEPKDEPAPLEPTSDIRSLAPAPLPQPVAAVA) form a disordered region.

Belongs to the universal ribosomal protein uS3 family.

This chain is Small ribosomal subunit protein uS3 (RpS3), found in Manduca sexta (Tobacco hawkmoth).